The sequence spans 466 residues: Ribulose bisphosphate carboxylase large chain (466 aa).

Residue Lys-5 is modified to N6,N6,N6-trimethyllysine. Residues Asn-114 and Thr-164 each coordinate substrate. Residue Lys-166 is the Proton acceptor of the active site. Residue Lys-168 coordinates substrate. Residues Lys-192, Asp-194, and Glu-195 each contribute to the Mg(2+) site. Lys-192 carries the N6-carboxylysine modification. His-285 functions as the Proton acceptor in the catalytic mechanism. Residues Arg-286, His-318, and Ser-370 each coordinate substrate.

The protein belongs to the RuBisCO large chain family. Type I subfamily. In terms of assembly, heterohexadecamer of 8 large chains and 8 small chains; disulfide-linked. The disulfide link is formed within the large subunit homodimers. It depends on Mg(2+) as a cofactor. Post-translationally, the disulfide bond which can form in the large chain dimeric partners within the hexadecamer appears to be associated with oxidative stress and protein turnover.

It is found in the plastid. The protein localises to the chloroplast. It carries out the reaction 2 (2R)-3-phosphoglycerate + 2 H(+) = D-ribulose 1,5-bisphosphate + CO2 + H2O. It catalyses the reaction D-ribulose 1,5-bisphosphate + O2 = 2-phosphoglycolate + (2R)-3-phosphoglycerate + 2 H(+). In terms of biological role, ruBisCO catalyzes two reactions: the carboxylation of D-ribulose 1,5-bisphosphate, the primary event in carbon dioxide fixation, as well as the oxidative fragmentation of the pentose substrate in the photorespiration process. Both reactions occur simultaneously and in competition at the same active site. The sequence is that of Ribulose bisphosphate carboxylase large chain from Saururus cernuus (Lizard's tail).